The chain runs to 561 residues: Putative transport protein YbjL (561 aa).

5 helical membrane passes run 8-28, 32-52, 66-86, 94-114, and 158-178; these read LLNG…LCLG, LGSV…LLGQ, FMLF…SIFF, MLAL…GKLF, and NLSL…IVGA. 2 consecutive RCK C-terminal domains span residues 200-288 and 292-373; these read RGLD…SFRN and VFDR…RIGF. 5 helical membrane-spanning segments follow: residues 383–403, 406–426, 447–467, 475–495, and 537–557; these read LLAF…TFQF, FSFG…LGFL, FGLM…INNG, MLIA…LFGA, and GTYA…VIIW.

Belongs to the AAE transporter (TC 2.A.81) family. YbjL subfamily.

The protein resides in the cell membrane. The sequence is that of Putative transport protein YbjL from Salmonella choleraesuis (strain SC-B67).